Consider the following 482-residue polypeptide: Glycogen synthase (482 aa).

Lys-21 is a binding site for ADP-alpha-D-glucose.

The protein belongs to the glycosyltransferase 1 family. Bacterial/plant glycogen synthase subfamily.

It catalyses the reaction [(1-&gt;4)-alpha-D-glucosyl](n) + ADP-alpha-D-glucose = [(1-&gt;4)-alpha-D-glucosyl](n+1) + ADP + H(+). It participates in glycan biosynthesis; glycogen biosynthesis. In terms of biological role, synthesizes alpha-1,4-glucan chains using ADP-glucose. This chain is Glycogen synthase, found in Clostridium perfringens (strain 13 / Type A).